Reading from the N-terminus, the 150-residue chain is Large ribosomal subunit protein bL9 (150 aa).

It belongs to the bacterial ribosomal protein bL9 family.

Its function is as follows. Binds to the 23S rRNA. This chain is Large ribosomal subunit protein bL9, found in Streptococcus pyogenes serotype M6 (strain ATCC BAA-946 / MGAS10394).